A 285-amino-acid chain; its full sequence is MKVFILALLALTATTAIAQLETTCSQGFGQYQQQQQPGQRQLLEQMKPCVAFLQQQCRPLRMPFLQTQVEQLSSCQIVQHQCCQQLAQIPERIRCHAIHSVVEAIMQQQSQQQWQERQQQAQHKSMRMLLENLSLMCNIYVPVQCQQQQQMGQQQQQQQLQEQLTPCATFLQHQCSPVTVPFPQIPVDQPTSCQNVQHQCCRQLSQIPEQFRCQAIHNVAEAIRQQQPQQQWQGMYQPQQPAQHESIRMSLQALRSMCNIYIPVQCPAPTAYNIPMVATCTSGAC.

An N-terminal signal peptide occupies residues methionine 1–alanine 18.

The protein belongs to the prolamin family. Post-translationally, contains disulfide bonds.

Seed storage protein. Might be integrated via inter-chain disulfide bonds within the glutenin polymer. This is Avenin-like b1 (AVNLB) from Triticum aestivum (Wheat).